The primary structure comprises 158 residues: Globin CTT-I/CTT-IA (158 aa).

Positions 1-15 are cleaved as a signal peptide; sequence MKFLILALCVAAAMA. One can recognise a Globin domain in the interval 16 to 158; that stretch reads GPSGDQIAAA…FVFSTLKNEL (143 aa). The heme b site is built by H74 and H109.

The protein belongs to the globin family. As to quaternary structure, monomer.

This Chironomus thummi thummi (Midge) protein is Globin CTT-I/CTT-IA (CTT-1).